The primary structure comprises 231 residues: Protoporphyrinogen IX dehydrogenase [quinone] (231 aa).

The Flavodoxin-like domain occupies 8–178; it reads CLMLYSTTDG…AVRRFASDFA (171 aa). FMN contacts are provided by residues 14-18 and 90-158; these read TTDGH and FFSV…ETDS. A helical membrane pass occupies residues 208 to 228; the sequence is CLLAIVGMSAAVIVGIRIIAA.

Belongs to the HemG family. Requires FMN as cofactor.

It is found in the membrane. It catalyses the reaction protoporphyrinogen IX + 3 a menaquinone = protoporphyrin IX + 3 a menaquinol. The catalysed reaction is protoporphyrinogen IX + 3 a ubiquinone = protoporphyrin IX + 3 a ubiquinol. It carries out the reaction protoporphyrinogen IX + 3 a quinone = protoporphyrin IX + 3 a quinol. The protein operates within porphyrin-containing compound metabolism; protoporphyrin-IX biosynthesis; protoporphyrin-IX from protoporphyrinogen-IX: step 1/1. In terms of biological role, in E.coli extracts under anerobic conditions catalyzes the 6-electron oxidation of protoporphyrinogen IX to form protoporphyrin IX, transferring electrons to fumarate reductase, presumably via menaquinone. In vitro under aerobic conditions forms protoporphyrin IX using ubiquinone as an electron acceptor. Complements an E.coli hemG deletion, allowing normal growth in vivo. In Leishmania major, this protein is Protoporphyrinogen IX dehydrogenase [quinone].